A 285-amino-acid polypeptide reads, in one-letter code: Ribosomal protein L11 methyltransferase (285 aa).

S-adenosyl-L-methionine contacts are provided by Thr-131, Gly-154, Asp-176, and Asn-223.

It belongs to the methyltransferase superfamily. PrmA family.

It is found in the cytoplasm. The enzyme catalyses L-lysyl-[protein] + 3 S-adenosyl-L-methionine = N(6),N(6),N(6)-trimethyl-L-lysyl-[protein] + 3 S-adenosyl-L-homocysteine + 3 H(+). Functionally, methylates ribosomal protein L11. In Brucella abortus (strain S19), this protein is Ribosomal protein L11 methyltransferase.